Consider the following 323-residue polypeptide: Aquaporin-4 (323 aa).

Topologically, residues 1–36 are cytoplasmic; it reads MSDRPAARRWGKCGPLCTRESIMVAFKGVWTQTFWK. 2 S-palmitoyl cysteine lipidation sites follow: Cys-13 and Cys-17. The helical transmembrane segment at 37–57 threads the bilayer; it reads AVTAEFLAMLIFVLLSLGSTI. Over 58-69 the chain is Extracellular; it reads NWGGAEKPLPVD. A helical membrane pass occupies residues 70 to 89; sequence MVLISLCFGLSIATMVQCFG. Topologically, residues 90-93 are cytoplasmic; sequence HISG. Positions 94–101 form an intramembrane region, discontinuously helical; sequence GHINPAVT. An NPA 1 motif is present at residues 97–99; sequence NPA. Over 102 to 115 the chain is Cytoplasmic; the sequence is VAMVCTRRISIAKS. Position 111 is a phosphoserine; by PKG (Ser-111). Residues 116–136 traverse the membrane as a helical segment; the sequence is VFYIAAQCLGAIIGAGILYLV. Over 137-155 the chain is Extracellular; it reads TPPSVVGGLGVTTVHGNLS. A glycan (N-linked (GlcNAc...) asparagine) is linked at Asn-153. A helical transmembrane segment spans residues 156 to 176; that stretch reads AGHGLLVELIITFQLVFTIFA. Over 177–184 the chain is Cytoplasmic; that stretch reads SCDSKRTD. Ser-180 is subject to Phosphoserine; by PKC. Residues 185–205 form a helical membrane-spanning segment; the sequence is VTGSIALAIGISVAIGHLFAI. Asn-206 carries an N-linked (GlcNAc...) asparagine glycan. Residues 206–208 lie on the Extracellular side of the membrane; that stretch reads NYT. The segment at residues 209 to 222 is an intramembrane region (discontinuously helical); sequence GASMNPARSFGPAV. An NPA 2 motif is present at residues 213–215; sequence NPA. The Extracellular segment spans residues 223 to 231; sequence IMGNWENHW. A helical membrane pass occupies residues 232–252; that stretch reads IYWVGPIIGAVLAGGLYEYVF. Residues 253–323 lie on the Cytoplasmic side of the membrane; sequence CPDVELKRRF…DPSGEVLSSV (71 aa). Phosphoserine is present on residues Ser-276 and Ser-285. A Phosphothreonine modification is found at Thr-289. Residue Ser-321 is modified to Phosphoserine.

This sequence belongs to the MIP/aquaporin (TC 1.A.8) family. As to quaternary structure, homotetramer. The tetramers can form oligomeric arrays in membranes. The size of the oligomers differs between tissues and is smaller in skeletal muscle than in brain. Interaction between AQP4 oligomeric arrays in close-by cells can contribute to cell-cell adhesion. Part of a complex containing MLC1, TRPV4, HEPACAM and ATP1B1. In terms of processing, phosphorylation by PKC at Ser-180 reduces conductance by 50%. Phosphorylation by PKG at Ser-111 in response to glutamate increases conductance by 40%. Post-translationally, isoform 2: Palmitoylated on its N-terminal region. Isoform 1: Not palmitoylated. In terms of tissue distribution, detected in brain and lung.

The protein localises to the cell membrane. It is found in the basolateral cell membrane. Its subcellular location is the endosome membrane. It localises to the sarcolemma. The protein resides in the cell projection. The enzyme catalyses H2O(in) = H2O(out). Forms a water-specific channel. Plays an important role in brain water homeostasis and in glymphatic solute transport. Required for a normal rate of water exchange across the blood brain interface. Required for normal levels of cerebrospinal fluid influx into the brain cortex and parenchyma along paravascular spaces that surround penetrating arteries, and for normal drainage of interstitial fluid along paravenous drainage pathways. Thereby, it is required for normal clearance of solutes from the brain interstitial fluid, including soluble beta-amyloid peptides derived from APP. Plays a redundant role in urinary water homeostasis and urinary concentrating ability. This Bos taurus (Bovine) protein is Aquaporin-4 (AQP4).